Consider the following 281-residue polypeptide: NADPH-dependent 7-cyano-7-deazaguanine reductase (281 aa).

Position 87 to 89 (87 to 89) interacts with substrate; sequence VES. Residue 89 to 90 participates in NADPH binding; that stretch reads SK. C188 functions as the Thioimide intermediate in the catalytic mechanism. The active-site Proton donor is the D195. A substrate-binding site is contributed by 227-228; the sequence is HE. Residue 256–257 participates in NADPH binding; the sequence is RG.

It belongs to the GTP cyclohydrolase I family. QueF type 2 subfamily. In terms of assembly, homodimer.

It localises to the cytoplasm. The catalysed reaction is 7-aminomethyl-7-carbaguanine + 2 NADP(+) = 7-cyano-7-deazaguanine + 2 NADPH + 3 H(+). It functions in the pathway tRNA modification; tRNA-queuosine biosynthesis. Catalyzes the NADPH-dependent reduction of 7-cyano-7-deazaguanine (preQ0) to 7-aminomethyl-7-deazaguanine (preQ1). This chain is NADPH-dependent 7-cyano-7-deazaguanine reductase, found in Aliivibrio salmonicida (strain LFI1238) (Vibrio salmonicida (strain LFI1238)).